The sequence spans 608 residues: Probable cytosolic Fe-S cluster assembly factor SPAC806.02c (608 aa).

Residue 13–20 coordinates ATP; it reads GKGGVGKS. [4Fe-4S] cluster-binding residues include Cys201 and Cys204. WD repeat units follow at residues 288 to 327, 331 to 371, 376 to 415, 421 to 460, 465 to 504, 529 to 567, and 576 to 608; these read GHTG…LVHV, FHTR…WECT, GHEN…EFDC, EHTQ…WALT, GHTN…EDVA, IHKG…EALW, and AHGV…WSFK.

The protein in the N-terminal section; belongs to the Mrp/NBP35 ATP-binding proteins family. NUBP2/CFD1 subfamily. This sequence in the C-terminal section; belongs to the WD repeat CIA1 family. As to quaternary structure, heterotetramer of 2 nbp35 and 2 SPAC806.02c chains. The cofactor is [4Fe-4S] cluster.

The protein resides in the cytoplasm. It is found in the nucleus. Fusion protein of two essential components of the cytosolic iron-sulfur (Fe/S) protein assembly (CIA) machinery. Required for maturation of extramitochondrial Fe-S proteins. May form a heterotetramer with nubp35, functioning as a Fe-S scaffold complex, mediating the de novo assembly of an Fe-S cluster and its transfer to target apoproteins. In Schizosaccharomyces pombe (strain 972 / ATCC 24843) (Fission yeast), this protein is Probable cytosolic Fe-S cluster assembly factor SPAC806.02c.